The sequence spans 682 residues: Potassium-transporting ATPase ATP-binding subunit (682 aa).

Transmembrane regions (helical) follow at residues 34-54 (PVMF…LAMV), 58-78 (IAGS…TVLF), 219-239 (IALT…TATL), and 254-274 (VLVA…LSAI). Aspartate 307 serves as the catalytic 4-aspartylphosphate intermediate. ATP is bound by residues aspartate 344, glutamate 348, 377–384 (FTAQSRMS), and lysine 395. The Mg(2+) site is built by aspartate 518 and aspartate 522. Helical transmembrane passes span 588-608 (FAII…LNVM), 616-636 (AILS…PLAL), and 662-682 (LVVP…LGLA).

It belongs to the cation transport ATPase (P-type) (TC 3.A.3) family. Type IA subfamily. As to quaternary structure, the system is composed of three essential subunits: KdpA, KdpB and KdpC.

The protein localises to the cell inner membrane. It carries out the reaction K(+)(out) + ATP + H2O = K(+)(in) + ADP + phosphate + H(+). Its function is as follows. Part of the high-affinity ATP-driven potassium transport (or Kdp) system, which catalyzes the hydrolysis of ATP coupled with the electrogenic transport of potassium into the cytoplasm. This subunit is responsible for energy coupling to the transport system and for the release of the potassium ions to the cytoplasm. The chain is Potassium-transporting ATPase ATP-binding subunit from Salmonella typhimurium (strain LT2 / SGSC1412 / ATCC 700720).